A 142-amino-acid chain; its full sequence is Large ribosomal subunit protein uL11 (142 aa).

This sequence belongs to the universal ribosomal protein uL11 family. In terms of assembly, part of the ribosomal stalk of the 50S ribosomal subunit. Interacts with L10 and the large rRNA to form the base of the stalk. L10 forms an elongated spine to which L12 dimers bind in a sequential fashion forming a multimeric L10(L12)X complex. One or more lysine residues are methylated.

Functionally, forms part of the ribosomal stalk which helps the ribosome interact with GTP-bound translation factors. This Shewanella pealeana (strain ATCC 700345 / ANG-SQ1) protein is Large ribosomal subunit protein uL11.